Here is a 491-residue protein sequence, read N- to C-terminus: Lysine--tRNA ligase (491 aa).

2 residues coordinate Mg(2+): E400 and E407.

Belongs to the class-II aminoacyl-tRNA synthetase family. Homodimer. Requires Mg(2+) as cofactor.

Its subcellular location is the cytoplasm. It carries out the reaction tRNA(Lys) + L-lysine + ATP = L-lysyl-tRNA(Lys) + AMP + diphosphate. The protein is Lysine--tRNA ligase of Mesomycoplasma hyopneumoniae (strain 7448) (Mycoplasma hyopneumoniae).